A 661-amino-acid chain; its full sequence is COBRA-like protein 7 (661 aa).

The first 26 residues, 1-26 (MDSAPNFIPRLLLLSLLIVSIPLTSS), serve as a signal peptide directing secretion. The tract at residues 26 to 45 (SQSDANTTNPSPSPPSDSDL) is disordered. Asn31, Asn64, Asn122, Asn170, Asn314, Asn327, Asn356, Asn369, Asn398, Asn410, Asn430, Asn472, Asn551, and Asn561 each carry an N-linked (GlcNAc...) asparagine glycan. The GPI-anchor amidated serine moiety is linked to residue Ser637. A propeptide spans 638–661 (SQHRKHISVFLLALPVLALLILRA) (removed in mature form).

This sequence belongs to the COBRA family. In terms of tissue distribution, expressed in roots, stems, leaves, flowers and siliques.

The protein localises to the cell membrane. This Arabidopsis thaliana (Mouse-ear cress) protein is COBRA-like protein 7 (COBL7).